A 340-amino-acid chain; its full sequence is Spike protein P5 (340 aa).

The interval 2–122 (ANQQIGGSTV…NFPIALGVWP (121 aa)) is domain-1. One can recognise a Collagen-like domain in the interval 123-141 (SGIKGDKGDPGAPGPAGGT). A domain-2 region spans residues 142 to 340 (VVVEDSGASF…IINITAAKIN (199 aa)).

As to quaternary structure, homotrimer.

It is found in the virion. In association with P31 and P2, forms the spike complexes located at the 5-fold vertices of the capsid. Essential for viral infectivity. In Enterobacteria phage PRD1 (Bacteriophage PRD1), this protein is Spike protein P5 (V).